The following is a 500-amino-acid chain: Lysine--tRNA ligase (500 aa).

Residues glutamate 410 and glutamate 417 each coordinate Mg(2+).

Belongs to the class-II aminoacyl-tRNA synthetase family. In terms of assembly, homodimer. Requires Mg(2+) as cofactor.

The protein resides in the cytoplasm. The catalysed reaction is tRNA(Lys) + L-lysine + ATP = L-lysyl-tRNA(Lys) + AMP + diphosphate. In Shewanella loihica (strain ATCC BAA-1088 / PV-4), this protein is Lysine--tRNA ligase.